Consider the following 137-residue polypeptide: GEL complex subunit OPTI (137 aa).

Over Met-1 to Val-44 the chain is Cytoplasmic. Residues Ile-45 to Leu-65 form a helical membrane-spanning segment. A topological domain (lumenal) is located at residue Arg-66. A helical membrane pass occupies residues Gly-67–Leu-84. Topologically, residues Tyr-85–Leu-103 are cytoplasmic. Residues Thr-104–His-127 form a helical membrane-spanning segment. At Leu-128–Leu-137 the chain is on the lumenal side.

This sequence belongs to the EMC6 family. As to quaternary structure, component of the GET- and EMC-like (GEL) complex, composed of RAB5IF/OPTI and TMCO1. The GEL complex is part of the multi-pass translocon (MPT) complex, composed of three subcomplexes, the GEL complex (composed of RAB5IF/OPTI and TMCO1), the BOS complex (composed of NCLN/Nicalin, NOMO and TMEM147) and the PAT complex (composed of WDR83OS/Asterix and CCDC47). The MPT complex associates with the SEC61 complex. Interacts with NDUFS3, NDUFA4, NDUFV1, NDUFA9 and NDUFS8 of the mitochondrial membrane respiratory chain NADH dehydrogenase (Complex I). Interacts with UQCRC2 of the ubiquinol-cytochrome c reductase complex (Complex III). Interacts with COX5A and COX7C of the cytochrome c oxidase complex (Complex IV). Expressed in embryonic stem cells and differentiated neuronal cells.

It localises to the endoplasmic reticulum membrane. The protein localises to the mitochondrion inner membrane. In terms of biological role, component of the multi-pass translocon (MPT) complex that mediates insertion of multi-pass membrane proteins into the lipid bilayer of membranes. The MPT complex takes over after the SEC61 complex: following membrane insertion of the first few transmembrane segments of proteins by the SEC61 complex, the MPT complex occludes the lateral gate of the SEC61 complex to promote insertion of subsequent transmembrane regions. Within the MPT complex, the GEL subcomplex may mediate insertion of transmembrane regions into the membrane. In addition to its role in multi-pass membrane insertion, RAB5IF/OPTI also acts as an assembly factor for mitochondrial respiratory complexes. The sequence is that of GEL complex subunit OPTI from Homo sapiens (Human).